We begin with the raw amino-acid sequence, 290 residues long: Taxis protein CheF1 (290 aa).

In terms of assembly, interacts with chemotaxis (Che) proteins as well as flagella accessory (Fla) proteins.

In terms of biological role, involved in taxis signal transduction. Essential for the ability to control the direction of flagellar rotation. May have a role between CheY and the flagellum. This Halobacterium salinarum (strain ATCC 29341 / DSM 671 / R1) protein is Taxis protein CheF1 (cheF1).